A 522-amino-acid chain; its full sequence is GMP synthase [glutamine-hydrolyzing] (522 aa).

In terms of domain architecture, Glutamine amidotransferase type-1 spans 5 to 204 (YILIIDFGSQ…VKNICNYTNV (200 aa)). Cysteine 82 acts as the Nucleophile in catalysis. Residues histidine 178 and glutamate 180 contribute to the active site. The 193-residue stretch at 205 to 397 (IKYSLSIRKI…IGIPKEIIFR (193 aa)) folds into the GMPS ATP-PPase domain. 232–238 (SGGIDSF) is an ATP binding site.

In terms of assembly, homodimer.

It carries out the reaction XMP + L-glutamine + ATP + H2O = GMP + L-glutamate + AMP + diphosphate + 2 H(+). It functions in the pathway purine metabolism; GMP biosynthesis; GMP from XMP (L-Gln route): step 1/1. In terms of biological role, catalyzes the synthesis of GMP from XMP. This chain is GMP synthase [glutamine-hydrolyzing], found in Wigglesworthia glossinidia brevipalpis.